A 942-amino-acid chain; its full sequence is Inter-alpha-trypsin inhibitor heavy chain H5 (942 aa).

A signal peptide spans 1–16 (MLLLLGLCLGLSLCVG). One can recognise a VIT domain in the interval 35–161 (VPRQVRLLQR…KAAFFLSYEE (127 aa)). Asn-97 and Asn-127 each carry an N-linked (GlcNAc...) asparagine glycan. Disordered regions lie at residues 116 to 136 (KKSG…NGEK) and 208 to 227 (SRQR…PSTV). Residues Asn-231, Asn-421, and Asn-508 are each glycosylated (N-linked (GlcNAc...) asparagine). The VWFA domain maps to 295 to 478 (NVVFVLDSSA…SQLIGFYDEI (184 aa)). The disordered stretch occupies residues 550–571 (QKAGKDVTGSPRPGGDGEGDTN). N-linked (GlcNAc...) asparagine glycans are attached at residues Asn-776, Asn-795, and Asn-862.

It belongs to the ITIH family. In terms of tissue distribution, abundantly expressed in placenta. Less abundant expression in mammary gland and ovary. Expression is barely detectable levels in all other tissues tested.

The protein localises to the secreted. Functionally, may act as a tumor suppressor. This chain is Inter-alpha-trypsin inhibitor heavy chain H5 (ITIH5), found in Homo sapiens (Human).